A 165-amino-acid chain; its full sequence is MNREKLMKMANTVRTGGKGTVRRKKKAVHKTNTTDDKRLQSTLKRIGVNSIPAIEEVNIFKDDVVIQFINPKVQASIAANTWVVSGSPQTKKLQDILPQIISQLGPDNMDNLKKLAEQFQKQASGEGNAASATIQEEDDDDVPELVGETFETAAEEKAPAAAASS.

Residues 33–97 (TTDDKRLQST…PQTKKLQDIL (65 aa)) enclose the NAC-A/B domain. A compositionally biased stretch (polar residues) spans 120–134 (QKQASGEGNAASATI). The tract at residues 120–144 (QKQASGEGNAASATIQEEDDDDVPE) is disordered.

The protein belongs to the NAC-beta family. In terms of assembly, part of the nascent polypeptide-associated complex (NAC). Interacts with EIF(ISO)4E.

The protein is Basic transcription factor 3 of Arabidopsis thaliana (Mouse-ear cress).